The following is a 692-amino-acid chain: Threonine--tRNA ligase (692 aa).

A TGS domain is found at 2 to 59; it reads AEAHISITVNGEAKEVEASQTGVELFADDKNIIAVRLNGELRDLYTPLHDGDNVESVT. A catalytic region spans residues 255 to 561; it reads DHRKLGQEMD…LLEHYAGAFP (307 aa). Zn(2+) is bound by residues C360, H411, and H538.

Belongs to the class-II aminoacyl-tRNA synthetase family. Homodimer. Zn(2+) serves as cofactor.

It localises to the cytoplasm. It carries out the reaction tRNA(Thr) + L-threonine + ATP = L-threonyl-tRNA(Thr) + AMP + diphosphate + H(+). Functionally, catalyzes the attachment of threonine to tRNA(Thr) in a two-step reaction: L-threonine is first activated by ATP to form Thr-AMP and then transferred to the acceptor end of tRNA(Thr). Also edits incorrectly charged L-seryl-tRNA(Thr). This is Threonine--tRNA ligase from Bifidobacterium animalis subsp. lactis (strain AD011).